Here is a 396-residue protein sequence, read N- to C-terminus: Putative nickel insertion protein (396 aa).

It belongs to the LarC family.

The polypeptide is Putative nickel insertion protein (Methanosarcina mazei (strain ATCC BAA-159 / DSM 3647 / Goe1 / Go1 / JCM 11833 / OCM 88) (Methanosarcina frisia)).